The following is a 560-amino-acid chain: Serine palmitoyltransferase 2 (560 aa).

Residues 65 to 85 (PMLVAVLTYVGYGVLTLFGYL) form a helical membrane-spanning segment. At Lys377 the chain carries N6-(pyridoxal phosphate)lysine.

Belongs to the class-II pyridoxal-phosphate-dependent aminotransferase family. In terms of assembly, component of the serine palmitoyltransferase (SPT) complex, which is composed of SPTLC1, SPTLC2 or SPTLC3 and SPTSSA or SPTSSB. The heterodimer consisting of SPTLC1 and SPTLC2/SPTLC3 forms the catalytic core of the enzyme, while SPTSSA or SPTSSB subunits determine substrate specificity. SPT also interacts with ORMDL proteins, especially ORMDL3, which negatively regulate SPT activity in the presence of ceramides. Forms dimers of heterodimers with SPTLC1. Pyridoxal 5'-phosphate serves as cofactor. As to expression, expressed in astrocytes.

The protein resides in the endoplasmic reticulum membrane. It catalyses the reaction L-serine + hexadecanoyl-CoA + H(+) = 3-oxosphinganine + CO2 + CoA. The enzyme catalyses octadecanoyl-CoA + L-serine + H(+) = 3-oxoeicosasphinganine + CO2 + CoA. It functions in the pathway lipid metabolism; sphingolipid metabolism. Its activity is regulated as follows. SPT complex catalytic activity is negatively regulated by ORMDL proteins, including ORMDL3, in the presence of ceramides. This mechanism allows to maintain ceramide levels at sufficient concentrations for the production of complex sphingolipids, but which prevents the accumulation of ceramides to levels that trigger apoptosis. Component of the serine palmitoyltransferase multisubunit enzyme (SPT) that catalyzes the initial and rate-limiting step in sphingolipid biosynthesis by condensing L-serine and activated acyl-CoA (most commonly palmitoyl-CoA) to form long-chain bases. The SPT complex is composed of SPTLC1, SPTLC2 or SPTLC3 and SPTSSA or SPTSSB. Within this complex, the heterodimer consisting of SPTLC1 and SPTLC2/SPTLC3 forms the catalytic core. The composition of the serine palmitoyltransferase (SPT) complex determines the substrate preference. The SPTLC1-SPTLC2-SPTSSA complex shows a strong preference for C16-CoA substrate, while the SPTLC1-SPTLC3-SPTSSA isozyme uses both C14-CoA and C16-CoA as substrates, with a slight preference for C14-CoA. The SPTLC1-SPTLC2-SPTSSB complex shows a strong preference for C18-CoA substrate, while the SPTLC1-SPTLC3-SPTSSB isozyme displays an ability to use a broader range of acyl-CoAs, without apparent preference. Crucial for adipogenesis. This Rattus norvegicus (Rat) protein is Serine palmitoyltransferase 2.